The following is a 231-amino-acid chain: N-acetylmuramate alpha-1-phosphate uridylyltransferase (231 aa).

Residues 11-13 (GER) and Lys-23 each bind UTP. Asn-106 is a binding site for substrate. A Mg(2+)-binding site is contributed by Asp-108. Asp-146 and Asp-213 together coordinate substrate. Asp-213 lines the Mg(2+) pocket.

Belongs to the nucleotidyltransferase MurU family. As to quaternary structure, monomer. The cofactor is Mg(2+).

It catalyses the reaction N-acetyl-alpha-D-muramate 1-phosphate + UDP + H(+) = UDP-N-acetyl-alpha-D-muramate + phosphate. It functions in the pathway cell wall biogenesis; peptidoglycan recycling. Functionally, catalyzes the formation of UDP-N-acetylmuramate (UDP-MurNAc), a crucial precursor of the bacterial peptidoglycan cell wall, from UTP and MurNAc-alpha-1P. Is likely involved in peptidoglycan recycling as part of a cell wall recycling pathway that bypasses de novo biosynthesis of the peptidoglycan precursor UDP-MurNAc. Is able to complement the fosfomycin sensitivity phenotype of a P.putida mutant lacking murU. This chain is N-acetylmuramate alpha-1-phosphate uridylyltransferase, found in Neisseria meningitidis serogroup B (strain ATCC BAA-335 / MC58).